A 125-amino-acid polypeptide reads, in one-letter code: Large ribosomal subunit protein uL22 (125 aa).

Belongs to the universal ribosomal protein uL22 family. Part of the 50S ribosomal subunit.

Functionally, this protein binds specifically to 23S rRNA; its binding is stimulated by other ribosomal proteins, e.g. L4, L17, and L20. It is important during the early stages of 50S assembly. It makes multiple contacts with different domains of the 23S rRNA in the assembled 50S subunit and ribosome. In terms of biological role, the globular domain of the protein is located near the polypeptide exit tunnel on the outside of the subunit, while an extended beta-hairpin is found that lines the wall of the exit tunnel in the center of the 70S ribosome. This Thermobifida fusca (strain YX) protein is Large ribosomal subunit protein uL22.